The chain runs to 304 residues: Ribosomal RNA small subunit methyltransferase H (304 aa).

S-adenosyl-L-methionine is bound by residues alanine 37–histidine 39, aspartate 57, phenylalanine 79, aspartate 100, and histidine 107.

Belongs to the methyltransferase superfamily. RsmH family.

It is found in the cytoplasm. It carries out the reaction cytidine(1402) in 16S rRNA + S-adenosyl-L-methionine = N(4)-methylcytidine(1402) in 16S rRNA + S-adenosyl-L-homocysteine + H(+). Its function is as follows. Specifically methylates the N4 position of cytidine in position 1402 (C1402) of 16S rRNA. The polypeptide is Ribosomal RNA small subunit methyltransferase H (Bacteroides thetaiotaomicron (strain ATCC 29148 / DSM 2079 / JCM 5827 / CCUG 10774 / NCTC 10582 / VPI-5482 / E50)).